We begin with the raw amino-acid sequence, 356 residues long: Glutamine synthetase cytosolic isozyme 1-1 (356 aa).

Residues 19–99 (IIAEYIWIGG…VMCDCYTPAG (81 aa)) enclose the GS beta-grasp domain. One can recognise a GS catalytic domain in the interval 106–356 (KRHNAAKIFS…IAETTIIWKP (251 aa)).

The protein belongs to the glutamine synthetase family. In terms of assembly, homooctamer. As to expression, highly expressed in leaf blades, at intermediate levels in spikelets (rice flower) and at lower levels in roots.

It localises to the cytoplasm. The catalysed reaction is L-glutamate + NH4(+) + ATP = L-glutamine + ADP + phosphate + H(+). Its function is as follows. High-affinity glutamine synthetase involved in ammonium assimilation. Seems to be a major component of the cytosolic glutamine synthetic pathway in leaf blades. Plays an important role in maintaining carbon and nitrogen metabolic balance during ammonium assimilation in shoots and roots, thus controlling plant growth and development. Plays an important role in maintaining broad range of metabolites and transcripts involved in the maintenance of plant metabolic homeostasis and development of plastid in roots. This Oryza sativa subsp. japonica (Rice) protein is Glutamine synthetase cytosolic isozyme 1-1.